Here is a 160-residue protein sequence, read N- to C-terminus: NADH-quinone oxidoreductase subunit I (160 aa).

4Fe-4S ferredoxin-type domains are found at residues 52–81 (RRYSNGEERCIACKLCEVICPAQAIVIEAE) and 91–120 (TRYDIDMTKCIYCGLCQEACPVDAIVEGPN). 8 residues coordinate [4Fe-4S] cluster: Cys61, Cys64, Cys67, Cys71, Cys100, Cys103, Cys106, and Cys110.

This sequence belongs to the complex I 23 kDa subunit family. In terms of assembly, NDH-1 is composed of 14 different subunits. Subunits NuoA, H, J, K, L, M, N constitute the membrane sector of the complex. [4Fe-4S] cluster serves as cofactor.

Its subcellular location is the cell membrane. It catalyses the reaction a quinone + NADH + 5 H(+)(in) = a quinol + NAD(+) + 4 H(+)(out). In terms of biological role, NDH-1 shuttles electrons from NADH, via FMN and iron-sulfur (Fe-S) centers, to quinones in the respiratory chain. The immediate electron acceptor for the enzyme in this species is believed to be ubiquinone. Couples the redox reaction to proton translocation (for every two electrons transferred, four hydrogen ions are translocated across the cytoplasmic membrane), and thus conserves the redox energy in a proton gradient. This is NADH-quinone oxidoreductase subunit I from Wolbachia sp. subsp. Brugia malayi (strain TRS).